The sequence spans 69 residues: Protein transport protein Sec61 subunit gamma (69 aa).

Topologically, residues 1–32 are cytoplasmic; sequence MDAVDSVVDPLREFAKDSVRLVKRCHKPDRKE. Residues 33-61 form a helical membrane-spanning segment; that stretch reads FTKVAARTAIGFVVMGFVGFFVKLIFIPI. Over 62-69 the chain is Extracellular; that stretch reads NNIIVGSG.

This sequence belongs to the SecE/SEC61-gamma family. In terms of assembly, heterotrimeric complex composed of SEC61-alpha, SEC61-beta and SEC61-gamma.

The protein resides in the endoplasmic reticulum membrane. Necessary for protein translocation in the endoplasmic reticulum. This Oryza sativa subsp. japonica (Rice) protein is Protein transport protein Sec61 subunit gamma.